The sequence spans 729 residues: uncharacterized protein (729 aa).

It belongs to the mimivirus L515/L516 family.

The protein resides in the virion. This is an uncharacterized protein from Acanthamoeba polyphaga mimivirus (APMV).